Reading from the N-terminus, the 359-residue chain is Putative mannose-1-phosphate guanyltransferase (359 aa).

It belongs to the transferase hexapeptide repeat family.

The catalysed reaction is alpha-D-mannose 1-phosphate + GTP + H(+) = GDP-alpha-D-mannose + diphosphate. The chain is Putative mannose-1-phosphate guanyltransferase (mpg1) from Sulfolobus acidocaldarius (strain ATCC 33909 / DSM 639 / JCM 8929 / NBRC 15157 / NCIMB 11770).